The following is a 467-amino-acid chain: Glutamate--tRNA ligase (467 aa).

The 'HIGH' region motif lies at 9–19 (PSPTGYLHIGG). Residues 237–241 (KLSKR) carry the 'KMSKS' region motif. K240 is a binding site for ATP.

Belongs to the class-I aminoacyl-tRNA synthetase family. Glutamate--tRNA ligase type 1 subfamily. As to quaternary structure, monomer.

It is found in the cytoplasm. The catalysed reaction is tRNA(Glu) + L-glutamate + ATP = L-glutamyl-tRNA(Glu) + AMP + diphosphate. Its function is as follows. Catalyzes the attachment of glutamate to tRNA(Glu) in a two-step reaction: glutamate is first activated by ATP to form Glu-AMP and then transferred to the acceptor end of tRNA(Glu). This is Glutamate--tRNA ligase from Xanthomonas euvesicatoria pv. vesicatoria (strain 85-10) (Xanthomonas campestris pv. vesicatoria).